Reading from the N-terminus, the 180-residue chain is Crossover junction endodeoxyribonuclease RuvC (180 aa).

Residues Asp13, Glu73, and Asp145 contribute to the active site. The Mg(2+) site is built by Asp13, Glu73, and Asp145.

Belongs to the RuvC family. As to quaternary structure, homodimer which binds Holliday junction (HJ) DNA. The HJ becomes 2-fold symmetrical on binding to RuvC with unstacked arms; it has a different conformation from HJ DNA in complex with RuvA. In the full resolvosome a probable DNA-RuvA(4)-RuvB(12)-RuvC(2) complex forms which resolves the HJ. Mg(2+) is required as a cofactor.

It is found in the cytoplasm. It catalyses the reaction Endonucleolytic cleavage at a junction such as a reciprocal single-stranded crossover between two homologous DNA duplexes (Holliday junction).. In terms of biological role, the RuvA-RuvB-RuvC complex processes Holliday junction (HJ) DNA during genetic recombination and DNA repair. Endonuclease that resolves HJ intermediates. Cleaves cruciform DNA by making single-stranded nicks across the HJ at symmetrical positions within the homologous arms, yielding a 5'-phosphate and a 3'-hydroxyl group; requires a central core of homology in the junction. The consensus cleavage sequence is 5'-(A/T)TT(C/G)-3'. Cleavage occurs on the 3'-side of the TT dinucleotide at the point of strand exchange. HJ branch migration catalyzed by RuvA-RuvB allows RuvC to scan DNA until it finds its consensus sequence, where it cleaves and resolves the cruciform DNA. This is Crossover junction endodeoxyribonuclease RuvC from Magnetococcus marinus (strain ATCC BAA-1437 / JCM 17883 / MC-1).